Here is a 210-residue protein sequence, read N- to C-terminus: Acyl-homoserine-lactone synthase (210 aa).

This sequence belongs to the autoinducer synthase family.

It catalyses the reaction a fatty acyl-[ACP] + S-adenosyl-L-methionine = an N-acyl-L-homoserine lactone + S-methyl-5'-thioadenosine + holo-[ACP] + H(+). Required for the synthesis of OHHL (N-(3-oxohexanoyl)-L-homoserine lactone), an autoinducer molecule which binds to EsaR. OHHL is necessary for biosynthesis of EPS virulence factor (extracellular heteropolysaccharide) which plays a role in the development of Stewart's wilt on sweet corn. The polypeptide is Acyl-homoserine-lactone synthase (esaI) (Pantoea stewartii subsp. stewartii (Erwinia stewartii)).